Here is a 397-residue protein sequence, read N- to C-terminus: Enoyl-[acyl-carrier-protein] reductase [NADH] (397 aa).

NAD(+) is bound by residues 48–53 (GASTGY), 74–75 (FE), 111–112 (DA), and 139–140 (LA). Residue tyrosine 225 participates in substrate binding. The Proton donor role is filled by tyrosine 235. NAD(+) contacts are provided by residues lysine 244 and 273-275 (VVT).

Belongs to the TER reductase family. In terms of assembly, monomer.

It carries out the reaction a 2,3-saturated acyl-[ACP] + NAD(+) = a (2E)-enoyl-[ACP] + NADH + H(+). It functions in the pathway lipid metabolism; fatty acid biosynthesis. Functionally, involved in the final reduction of the elongation cycle of fatty acid synthesis (FAS II). Catalyzes the reduction of a carbon-carbon double bond in an enoyl moiety that is covalently linked to an acyl carrier protein (ACP). The sequence is that of Enoyl-[acyl-carrier-protein] reductase [NADH] from Edwardsiella ictaluri (strain 93-146).